A 613-amino-acid chain; its full sequence is Dihydroxy-acid dehydratase (613 aa).

Asp81 is a Mg(2+) binding site. Cys122 provides a ligand contact to [2Fe-2S] cluster. Asp123 and Lys124 together coordinate Mg(2+). N6-carboxylysine is present on Lys124. Residue Cys193 coordinates [2Fe-2S] cluster. Mg(2+) is bound at residue Glu489. Catalysis depends on Ser515, which acts as the Proton acceptor.

Belongs to the IlvD/Edd family. As to quaternary structure, homodimer. [2Fe-2S] cluster serves as cofactor. The cofactor is Mg(2+).

The enzyme catalyses (2R)-2,3-dihydroxy-3-methylbutanoate = 3-methyl-2-oxobutanoate + H2O. The catalysed reaction is (2R,3R)-2,3-dihydroxy-3-methylpentanoate = (S)-3-methyl-2-oxopentanoate + H2O. Its pathway is amino-acid biosynthesis; L-isoleucine biosynthesis; L-isoleucine from 2-oxobutanoate: step 3/4. It functions in the pathway amino-acid biosynthesis; L-valine biosynthesis; L-valine from pyruvate: step 3/4. In terms of biological role, functions in the biosynthesis of branched-chain amino acids. Catalyzes the dehydration of (2R,3R)-2,3-dihydroxy-3-methylpentanoate (2,3-dihydroxy-3-methylvalerate) into 2-oxo-3-methylpentanoate (2-oxo-3-methylvalerate) and of (2R)-2,3-dihydroxy-3-methylbutanoate (2,3-dihydroxyisovalerate) into 2-oxo-3-methylbutanoate (2-oxoisovalerate), the penultimate precursor to L-isoleucine and L-valine, respectively. The protein is Dihydroxy-acid dehydratase of Pseudomonas putida (strain GB-1).